We begin with the raw amino-acid sequence, 401 residues long: Odorant receptor 88a (401 aa).

The Cytoplasmic portion of the chain corresponds to 1–26 (MKPTEIKKPYRMEEFLRPQMFQEVAQ). The chain crosses the membrane as a helical span at residues 27–47 (MVHFQWRRNPVDNSMVNASMV). At 48–52 (PFCLS) the chain is on the extracellular side. The helical transmembrane segment at 53–73 (AFLNVLFFGCNGWDIIGHFWL) threads the bilayer. At 74 to 142 (GHPANQNPPV…NFWQRYRFIR (69 aa)) the chain is on the cytoplasmic side. The helical transmembrane segment at 143–163 (IYSHLGGPMFCVVPLALFLLT) threads the bilayer. The Extracellular segment spans residues 164–191 (HEGKDTPVAQHEQLLGGWLPCGVRKDPN). Residues 192 to 212 (FYLLVWSFDLMCTTCGVSFFV) traverse the membrane as a helical segment. The Cytoplasmic segment spans residues 213-277 (TFDNLFNVMQ…LCRKYNDIFK (65 aa)). The helical transmembrane segment at 278–298 (VAFLVSNFVGAGSLCFYLFML) threads the bilayer. Over 299–303 (SETSD) the chain is Extracellular. The helical transmembrane segment at 304-324 (VLIIAQYILPTLVLVGFTFEI) threads the bilayer. At 325–370 (CLRGTQLEKASEGLESSLRSQEWYLGSRRYRKFYLLWTQYCQRTQQ) the chain is on the cytoplasmic side. Residues 371–391 (LGAFGLIQVNMVHFTEIMQLA) traverse the membrane as a helical segment. The Extracellular portion of the chain corresponds to 392–401 (YRLFTFLKSH).

The protein belongs to the insect chemoreceptor superfamily. Heteromeric odorant receptor channel (TC 1.A.69) family. Or49a subfamily. In terms of assembly, interacts with Orco. Complexes exist early in the endomembrane system in olfactory sensory neurons (OSNs), coupling these complexes to the conserved ciliary trafficking pathway. In terms of tissue distribution, expressed in olfactory sensory neurons in the antenna.

Its subcellular location is the cell membrane. Its function is as follows. Odorant receptor which mediates acceptance or avoidance behavior, depending on its substrates. The odorant receptor repertoire encodes a large collection of odor stimuli that vary widely in identity, intensity, and duration. May form a complex with Orco to form odorant-sensing units, providing sensitive and prolonged odorant signaling and calcium permeability. The polypeptide is Odorant receptor 88a (Or88a) (Drosophila melanogaster (Fruit fly)).